The chain runs to 320 residues: Polynucleotide 5'-triphosphatase CTL1 (320 aa).

Positions 1-12 (MSDQPETPSNSR) are enriched in polar residues. The tract at residues 1-23 (MSDQPETPSNSRNSHENVGAKKA) is disordered. Basic and acidic residues predominate over residues 13 to 23 (NSHENVGAKKA).

It belongs to the fungal TPase family. Mg(2+) is required as a cofactor. It depends on Mn(2+) as a cofactor.

It is found in the cytoplasm. The protein localises to the nucleus. It catalyses the reaction a 5'-end triphospho-ribonucleoside in mRNA + H2O = a 5'-end diphospho-ribonucleoside in mRNA + phosphate + H(+). Functionally, probably involved in an RNA processing event other than mRNA capping. Releases gamma-phosphate from the 5'-end of RNA to produce a diphosphate terminus. The polypeptide is Polynucleotide 5'-triphosphatase CTL1 (Saccharomyces cerevisiae (strain ATCC 204508 / S288c) (Baker's yeast)).